A 239-amino-acid polypeptide reads, in one-letter code: Derlin-2 (239 aa).

Residues 1 to 56 lie on the Cytoplasmic side of the membrane; the sequence is MAYQSLRLEYLQIPPVSRAYTTACVLTTAAVQLELITPFQLYFNPELIFKHFQIWR. Residues 57 to 77 traverse the membrane as a helical segment; it reads LITNFLFFGPVGFNFLFNMIF. Residues 78 to 98 lie on the Lumenal side of the membrane; the sequence is LYRYCRMLEEGSFRGRTADFV. Residues 99 to 119 form a helical membrane-spanning segment; sequence FMFLFGGFLMTLFGLFVSLVF. Residues 120–150 lie on the Cytoplasmic side of the membrane; sequence LGQAFTIMLVYVWSRRNPYVRMNFFGLLNFQ. A helical membrane pass occupies residues 151–171; the sequence is APFLPWVLMGFSLLLGNSIIV. D172 is a topological domain (lumenal). The helical transmembrane segment at 173–193 threads the bilayer; the sequence is LLGIAVGHIYFFLEDVFPNQP. Topologically, residues 194–239 are cytoplasmic; the sequence is GGIRILKTPSILKAIFDTPDEDPNYNPLPEERPGGFAWGEGQRLGG. Positions 215 to 239 are disordered; sequence DPNYNPLPEERPGGFAWGEGQRLGG. The span at 229 to 239 shows a compositional bias: gly residues; it reads FAWGEGQRLGG.

The protein belongs to the derlin family. Forms homo- and heterooligomers with DERL3 and, to a lesser extent, with DERL1. Interacts with the SEL1L/SYVN1 and VCP/SELENOS protein complexes. Mediates association between VCP and EDEM1, as well as that between VCP and the misfolded glycoproteins. Interacts with OS9. Interacts with SELENOK and SELENOS. Interacts with the signal recognition particle/SRP and the SRP receptor; in the process of endoplasmic reticulum stress-induced pre-emptive quality control. Interacts with CCDC47.

It localises to the endoplasmic reticulum membrane. Its function is as follows. Functional component of endoplasmic reticulum-associated degradation (ERAD) for misfolded lumenal glycoproteins, but not that of misfolded nonglycoproteins. May act by forming a channel that allows the retrotranslocation of misfolded glycoproteins into the cytosol where they are ubiquitinated and degraded by the proteasome. May mediate the interaction between VCP and misfolded glycoproteins. May also be involved in endoplasmic reticulum stress-induced pre-emptive quality control, a mechanism that selectively attenuates the translocation of newly synthesized proteins into the endoplasmic reticulum and reroutes them to the cytosol for proteasomal degradation. The sequence is that of Derlin-2 from Pongo abelii (Sumatran orangutan).